Reading from the N-terminus, the 262-residue chain is Nurim (262 aa).

Residues 1-4 (MAPA) lie on the Nuclear side of the membrane. A helical transmembrane segment spans residues 5 to 28 (LLLVPAALASFILAFGTGVEFVRF). Residues 29–58 (TSLRPLLGGIPESGGPDARQGWLAALQDQS) lie on the Perinuclear space side of the membrane. Residues 59 to 80 (ILVPLAWDLGLLLLFVGQHSLM) traverse the membrane as a helical segment. The Nuclear portion of the chain corresponds to 81–97 (ATETVKAWMSRYFGVLQ). Residues 98–114 (RSLYVACTALALQLVMR) traverse the membrane as a helical segment. Over 115–133 (YWEPVPRGPVLWEAQAEPW) the chain is Perinuclear space. A helical membrane pass occupies residues 134 to 164 (ATWVPLLCFVLHVISWLLIFSILLVFDYAEL). Over 165–191 (MGLKQVYYHVLGLGEPLALKSPRALRL) the chain is Nuclear. The chain crosses the membrane as a helical span at residues 192–210 (FSHLRHPVCVELLTVLWVV). Over 211 to 216 (PTLGTD) the chain is Perinuclear space. Residues 217–234 (RLLLALLLTLYLGLAHGL) form a helical membrane-spanning segment. The Nuclear portion of the chain corresponds to 235–262 (DQQDLRYLRAQLQRKLHLLSRPQDGEAE).

The protein belongs to the nurim family.

The protein localises to the nucleus inner membrane. This is Nurim (NRM) from Sus scrofa (Pig).